Consider the following 143-residue polypeptide: Larval cuticle protein LCP-17 (143 aa).

An N-terminal signal peptide occupies residues 1–16 (MKFLIVLAVAVACASA). The Chitin-binding type R&amp;R domain occupies 41 to 110 (EGHFQFNYET…PQGSHLPTPH (70 aa)).

Its function is as follows. Component of the cuticle of the larva of Bombyx mori. This chain is Larval cuticle protein LCP-17 (LCP17), found in Bombyx mori (Silk moth).